We begin with the raw amino-acid sequence, 179 residues long: Ribosome maturation factor RimM (179 aa).

The PRC barrel domain maps to 102 to 173 (PEEYHYRDLI…ALHVQPPPGL (72 aa)).

This sequence belongs to the RimM family. As to quaternary structure, binds ribosomal protein uS19.

It is found in the cytoplasm. Functionally, an accessory protein needed during the final step in the assembly of 30S ribosomal subunit, possibly for assembly of the head region. Essential for efficient processing of 16S rRNA. May be needed both before and after RbfA during the maturation of 16S rRNA. It has affinity for free ribosomal 30S subunits but not for 70S ribosomes. The polypeptide is Ribosome maturation factor RimM (Synechococcus sp. (strain JA-2-3B'a(2-13)) (Cyanobacteria bacterium Yellowstone B-Prime)).